We begin with the raw amino-acid sequence, 212 residues long: Phosphoribosylglycinamide formyltransferase (212 aa).

12-14 is a binding site for N(1)-(5-phospho-beta-D-ribosyl)glycinamide; the sequence is GTN. (6R)-10-formyltetrahydrofolate is bound by residues 90–93 and asparagine 107; that span reads MKIL. Histidine 109 serves as the catalytic Proton donor.

Belongs to the GART family.

It carries out the reaction N(1)-(5-phospho-beta-D-ribosyl)glycinamide + (6R)-10-formyltetrahydrofolate = N(2)-formyl-N(1)-(5-phospho-beta-D-ribosyl)glycinamide + (6S)-5,6,7,8-tetrahydrofolate + H(+). It participates in purine metabolism; IMP biosynthesis via de novo pathway; N(2)-formyl-N(1)-(5-phospho-D-ribosyl)glycinamide from N(1)-(5-phospho-D-ribosyl)glycinamide (10-formyl THF route): step 1/1. In terms of biological role, catalyzes the transfer of a formyl group from 10-formyltetrahydrofolate to 5-phospho-ribosyl-glycinamide (GAR), producing 5-phospho-ribosyl-N-formylglycinamide (FGAR) and tetrahydrofolate. This Haemophilus influenzae (strain ATCC 51907 / DSM 11121 / KW20 / Rd) protein is Phosphoribosylglycinamide formyltransferase.